Here is a 464-residue protein sequence, read N- to C-terminus: Rhodopsin (464 aa).

Over 1-33 the chain is Extracellular; the sequence is MGRDIPDNETWWYNPTMEVHPHWKQFNQVPDAV. An N-linked (GlcNAc...) asparagine glycan is attached at Asn-8. A helical transmembrane segment spans residues 34–58; it reads YYSLGIFIGICGIIGCTGNGIVIYL. Over 59–70 the chain is Cytoplasmic; the sequence is FTKTKSLQTPAN. Residues 71 to 97 form a helical membrane-spanning segment; sequence MFIINLAFSDFTFSLVNGFPLMTISCF. At 98–109 the chain is on the extracellular side; that stretch reads IKKWVFGMAACK. A disulfide bridge connects residues Cys-108 and Cys-186. A helical membrane pass occupies residues 110–131; that stretch reads VYGFIGGIFGLMSIMTMSMISI. The 'Ionic lock' involved in activated form stabilization signature appears at 132–134; the sequence is DRY. At 132–151 the chain is on the cytoplasmic side; the sequence is DRYNVIGRPMAASKKMSHRR. A helical membrane pass occupies residues 152–172; that stretch reads AFLMIIFVWMWSTLWSIGPIF. Over 173 to 199 the chain is Extracellular; sequence GWGAYVLEGVLCNCSFDYITRDSATRS. The chain crosses the membrane as a helical span at residues 200–224; the sequence is NIVCMYIFAFCFPILIIFFCYFNIV. Residues 225–261 are Cytoplasmic-facing; it reads MAVSNHEKEMAAMAKRLNAKELRKAQAGASAEMKLAK. A helical transmembrane segment spans residues 262–283; the sequence is ISIVIVTQFLLSWSPYAVVALL. Topologically, residues 284-293 are extracellular; it reads AQFGPIEWVT. The chain crosses the membrane as a helical span at residues 294 to 315; that stretch reads PYAAQLPVMFAKASAIHNPLIY. N6-(retinylidene)lysine is present on Lys-305. Residues 316–464 are Cytoplasmic-facing; sequence SVSHPKFREA…QGVDNQAYQA (149 aa). S-palmitoyl cysteine attachment occurs at residues Cys-336 and Cys-337. Residues 344–464 are disordered; that stretch reads VEDDKDAETE…QGVDNQAYQA (121 aa). Positions 367-401 are enriched in low complexity; sequence AAQMKEMMAMMQKMQQQQAAYPPQGAYPPQGGYPP. Pro residues-rich tracts occupy residues 416–425 and 434–452; these read QGYPPPPQGY and QGYPPPQGAPPQGAPPQAA.

Belongs to the G-protein coupled receptor 1 family. Opsin subfamily. Post-translationally, contains one covalently linked retinal chromophore. Upon light absorption, the covalently bound 11-cis-retinal is converted to all-trans-retinal. After hydrolysis of the Schiff base and release of the covalently bound all-trans-retinal, active rhodopsin is regenerated by binding of a fresh molecule of 11-cis-retinal.

Its subcellular location is the cell projection. The protein resides in the rhabdomere membrane. Photoreceptor required for image-forming vision at low light intensity. Light-induced isomerization of 11-cis to all-trans retinal triggers a conformational change that activates signaling via G-proteins. Signaling mediates the activation of phospholipase C. Subsequent receptor phosphorylation mediates displacement of the bound G-protein alpha subunit by arrestin and terminates signaling. This chain is Rhodopsin (RHO), found in Sepia officinalis (Common cuttlefish).